The following is a 161-amino-acid chain: Nucleotide-binding protein Pnec_0318 (161 aa).

It belongs to the YajQ family.

Functionally, nucleotide-binding protein. This is Nucleotide-binding protein Pnec_0318 from Polynucleobacter necessarius subsp. necessarius (strain STIR1).